The chain runs to 134 residues: Small ribosomal subunit protein bS16 (134 aa).

Positions 105 to 134 (QNERREKRLAIKTRRRQAKKAAEAEGQESA) are disordered. A compositionally biased stretch (basic residues) spans 114–123 (AIKTRRRQAK).

Belongs to the bacterial ribosomal protein bS16 family.

This Chlorobium phaeobacteroides (strain BS1) protein is Small ribosomal subunit protein bS16.